Here is a 536-residue protein sequence, read N- to C-terminus: UDP-N-acetylmuramate--L-alanine ligase (536 aa).

G133 to T139 contributes to the ATP binding site.

The protein belongs to the MurCDEF family.

It localises to the cytoplasm. It catalyses the reaction UDP-N-acetyl-alpha-D-muramate + L-alanine + ATP = UDP-N-acetyl-alpha-D-muramoyl-L-alanine + ADP + phosphate + H(+). The protein operates within cell wall biogenesis; peptidoglycan biosynthesis. Functionally, cell wall formation. The protein is UDP-N-acetylmuramate--L-alanine ligase of Wolbachia sp. subsp. Brugia malayi (strain TRS).